A 446-amino-acid chain; its full sequence is Maltoporin (446 aa).

An N-terminal signal peptide occupies residues 1 to 25; sequence MMITLRKLPLAVAVAAGVMSAQAMA.

This sequence belongs to the porin LamB (TC 1.B.3) family. In terms of assembly, homotrimer formed of three 18-stranded antiparallel beta-barrels, containing three independent channels.

It localises to the cell outer membrane. It catalyses the reaction beta-maltose(in) = beta-maltose(out). Involved in the transport of maltose and maltodextrins. This is Maltoporin from Escherichia coli O127:H6 (strain E2348/69 / EPEC).